A 963-amino-acid chain; its full sequence is MAKGFYISKALGILGILLGVAAVATIIALSVVYAQEKNKNAEHVPQAPTSPTITTTAAITLDQSKPWNRYRLPTTLLPDSYNVTLRPYLTPNADGLYIFKGKSIVRLLCQEPTDVIIIHSKKLNYTTQGHMVVLRGVGDSQVPEIDRTELVELTEYLVVHLKGSLQPGHMYEMESEFQGELADDLAGFYRSEYMEGNVKKVLATTQMQSTDARKSFPCFDEPAMKATFNITLIHPNNLTALSNMPPKGSSTPLAEDPNWSVTEFETTPVMSTYLLAYIVSEFQSVNETAQNGVLIRIWARPNAIAEGHGMYALNVTGPILNFFANHYNTSYPLPKSDQIALPDFNAGAMENWGLVTYRENALLFDPQSSSISNKERVVTVIAHELAHQWFGNLVTLAWWNDLWLNEGFASYVEYLGADHAEPTWNLKDLIVPGDVYRVMAVDALASSHPLTTPAEEVNTPAQISEMFDSISYSKGASVIRMLSNFLTEDLFKEGLASYLHAFAYQNTTYLDLWEHLQKAVDAQTSIRLPDTVRAIMDRWTLQMGFPVITVDTKTGNISQKHFLLDSESNVTRSSAFDYLWIVPISSIKNGVMQDHYWLRDVSQAQNDLFKTASDDWVLLNVNVTGYFQVNYDEDNWRMIQHQLQTNLSVIPVINRAQVIYDSFNLATAHMVPVTLALDNTLFLNGEKEYMPWQAALSSLSYFSLMFDRSEVYGPMKKYLRKQVEPLFQHFETLTKNWTERPENLMDQYSEINAISTACSNGLPQCENLAKTLFDQWMSDPENNPIHPNLRSTIYCNAIAQGGQDQWDFAWGQLQQAQLVNEADKLRSALACSNEVWLLNRYLGYTLNPDLIRKQDATSTINSIASNVIGQPLAWDFVQSNWKKLFQDYGGGSFSFSNLIQGVTRRFSSEFELQQLEQFKKNNMDVGFGSGTRALEQALEKTKANIKWVKENKEVVLNWFIEHS.

Over 2–8 (AKGFYIS) the chain is Cytoplasmic. A helical; Signal-anchor for type II membrane protein transmembrane segment spans residues 9–32 (KALGILGILLGVAAVATIIALSVV). Positions 33 to 64 (YAQEKNKNAEHVPQAPTSPTITTTAAITLDQS) are cytosolic Ser/Thr-rich junction. Residues 33 to 963 (YAQEKNKNAE…VVLNWFIEHS (931 aa)) lie on the Extracellular side of the membrane. Positions 65 to 963 (KPWNRYRLPT…VVLNWFIEHS (899 aa)) are metalloprotease. Asn-82 and Asn-124 each carry an N-linked (GlcNAc...) asparagine glycan. A Sulfotyrosine modification is found at Tyr-171. N-linked (GlcNAc...) asparagine glycosylation is found at Asn-229, Asn-237, Asn-258, Asn-286, Asn-314, and Asn-328. Residue 347-351 (GAMEN) participates in substrate binding. Position 383 (His-383) interacts with Zn(2+). The active-site Proton acceptor is Glu-384. Zn(2+) is bound by residues His-387 and Glu-406. N-linked (GlcNAc...) asparagine glycans are attached at residues Asn-506, Asn-556, Asn-569, Asn-622, Asn-646, and Asn-736. Residues 717-813 (KYLRKQVEPL…DQWDFAWGQL (97 aa)) form an interaction with TGEV spike glycoprotein region. 2 disulfide bridges follow: Cys-758–Cys-765 and Cys-795–Cys-831.

Belongs to the peptidase M1 family. As to quaternary structure, homodimer. Interacts with SLC6A19. (Microbial infection) Interacts with TGEV and PRCoV spike glycoprotein. It depends on Zn(2+) as a cofactor. Post-translationally, sulfated. In terms of processing, N- and O-glycosylated. May undergo proteolysis and give rise to a soluble form.

The protein resides in the cell membrane. The catalysed reaction is Release of an N-terminal amino acid, Xaa-|-Yaa- from a peptide, amide or arylamide. Xaa is preferably Ala, but may be most amino acids including Pro (slow action). When a terminal hydrophobic residue is followed by a prolyl residue, the two may be released as an intact Xaa-Pro dipeptide.. Its function is as follows. Broad specificity aminopeptidase which plays a role in the final digestion of peptides generated from hydrolysis of proteins by gastric and pancreatic proteases. Also involved in the processing of various peptides including peptide hormones, such as angiotensin III and IV, neuropeptides, and chemokines. May also be involved the cleavage of peptides bound to major histocompatibility complex class II molecules of antigen presenting cells. May have a role in angiogenesis and promote cholesterol crystallization. It is able to degrade Leu-enkephalin and Met-enkephalin but not cholecystokinin CCK8, neuromedin C (GRP-10), somatostatin-14, substance P and vasoactive intestinal peptide. May have a role in amino acid transport by acting as binding partner of amino acid transporter SLC6A19 and regulating its activity. (Microbial infection) In case of porcine transmissible gastroenteritis coronavirus (TGEV) and porcine respiratory coronavirus (PRCoV) infections, serves as a receptor for TGEV and PRCoV spike glycoprotein in a species-specific manner. The protein is Aminopeptidase N (ANPEP) of Sus scrofa (Pig).